The chain runs to 548 residues: Hydroxylamine reductase (548 aa).

Residues cysteine 3, cysteine 6, cysteine 15, and cysteine 21 each contribute to the [4Fe-4S] cluster site. 8 residues coordinate hybrid [4Fe-2O-2S] cluster: histidine 240, glutamate 264, cysteine 308, cysteine 402, cysteine 430, cysteine 455, glutamate 490, and lysine 492. Cysteine 402 is modified (cysteine persulfide).

The protein belongs to the HCP family. The cofactor is [4Fe-4S] cluster. Requires hybrid [4Fe-2O-2S] cluster as cofactor.

The protein resides in the cytoplasm. It catalyses the reaction A + NH4(+) + H2O = hydroxylamine + AH2 + H(+). In terms of biological role, catalyzes the reduction of hydroxylamine to form NH(3) and H(2)O. This is Hydroxylamine reductase from Parabacteroides distasonis (strain ATCC 8503 / DSM 20701 / CIP 104284 / JCM 5825 / NCTC 11152).